Consider the following 310-residue polypeptide: 26S proteasome non-ATPase regulatory subunit 14 (310 aa).

In terms of domain architecture, MPN spans 31–166 (VYISSLALLK…IDAFRLINAN (136 aa)). Zn(2+) is bound by residues His-113, His-115, and Asp-126. Positions 113–126 (HSHPGFGCWLSGVD) match the JAMM motif motif. 2 positions are modified to phosphoserine: Ser-150 and Ser-224. Thr-266 carries the post-translational modification Phosphothreonine.

The protein belongs to the peptidase M67A family. PSMD14 subfamily. In terms of assembly, component of the 19S proteasome regulatory particle complex. The 26S proteasome consists of a 20S core particle (CP) and two 19S regulatory subunits (RP). The regulatory particle is made of a lid composed of 9 subunits including PSMD4, a base containing 6 ATPases and few additional components. Within the complex, PSMD4 interacts with subunit PSMD7 through their respective MPN domain. Interacts with TXNL1. As to expression, widely expressed. Highest levels in heart and skeletal muscle.

Functionally, component of the 26S proteasome, a multiprotein complex involved in the ATP-dependent degradation of ubiquitinated proteins. This complex plays a key role in the maintenance of protein homeostasis by removing misfolded or damaged proteins, which could impair cellular functions, and by removing proteins whose functions are no longer required. Therefore, the proteasome participates in numerous cellular processes, including cell cycle progression, apoptosis, or DNA damage repair. The PSMD14 subunit is a metalloprotease that specifically cleaves 'Lys-63'-linked polyubiquitin chains within the complex. Plays a role in response to double-strand breaks (DSBs): acts as a regulator of non-homologous end joining (NHEJ) by cleaving 'Lys-63'-linked polyubiquitin, thereby promoting retention of JMJD2A/KDM4A on chromatin and restricting TP53BP1 accumulation. Also involved in homologous recombination repair by promoting RAD51 loading. The sequence is that of 26S proteasome non-ATPase regulatory subunit 14 (PSMD14) from Homo sapiens (Human).